Here is a 337-residue protein sequence, read N- to C-terminus: Holliday junction branch migration complex subunit RuvB (337 aa).

The tract at residues 4 to 186 (ADRLIHPQII…FGIPLRLEFY (183 aa)) is large ATPase domain (RuvB-L). ATP contacts are provided by residues Arg-26, Gly-67, Lys-70, Thr-71, Thr-72, 133 to 135 (EDY), Arg-176, Tyr-186, and Arg-223. Thr-71 contributes to the Mg(2+) binding site. The small ATPAse domain (RuvB-S) stretch occupies residues 187–257 (NVKDLSSIVA…IAEAALDMLD (71 aa)). The head domain (RuvB-H) stretch occupies residues 260–337 (AEGFDYMDRK…NHFNIIKPDA (78 aa)). Residues Arg-296, Arg-315, and Arg-320 each contribute to the DNA site.

Belongs to the RuvB family. As to quaternary structure, homohexamer. Forms an RuvA(8)-RuvB(12)-Holliday junction (HJ) complex. HJ DNA is sandwiched between 2 RuvA tetramers; dsDNA enters through RuvA and exits via RuvB. An RuvB hexamer assembles on each DNA strand where it exits the tetramer. Each RuvB hexamer is contacted by two RuvA subunits (via domain III) on 2 adjacent RuvB subunits; this complex drives branch migration. In the full resolvosome a probable DNA-RuvA(4)-RuvB(12)-RuvC(2) complex forms which resolves the HJ.

The protein localises to the cytoplasm. It catalyses the reaction ATP + H2O = ADP + phosphate + H(+). In terms of biological role, the RuvA-RuvB-RuvC complex processes Holliday junction (HJ) DNA during genetic recombination and DNA repair, while the RuvA-RuvB complex plays an important role in the rescue of blocked DNA replication forks via replication fork reversal (RFR). RuvA specifically binds to HJ cruciform DNA, conferring on it an open structure. The RuvB hexamer acts as an ATP-dependent pump, pulling dsDNA into and through the RuvAB complex. RuvB forms 2 homohexamers on either side of HJ DNA bound by 1 or 2 RuvA tetramers; 4 subunits per hexamer contact DNA at a time. Coordinated motions by a converter formed by DNA-disengaged RuvB subunits stimulates ATP hydrolysis and nucleotide exchange. Immobilization of the converter enables RuvB to convert the ATP-contained energy into a lever motion, pulling 2 nucleotides of DNA out of the RuvA tetramer per ATP hydrolyzed, thus driving DNA branch migration. The RuvB motors rotate together with the DNA substrate, which together with the progressing nucleotide cycle form the mechanistic basis for DNA recombination by continuous HJ branch migration. Branch migration allows RuvC to scan DNA until it finds its consensus sequence, where it cleaves and resolves cruciform DNA. The chain is Holliday junction branch migration complex subunit RuvB from Shewanella halifaxensis (strain HAW-EB4).